The sequence spans 445 residues: tRNA modification GTPase MnmE (445 aa).

R25, E83, and K121 together coordinate (6S)-5-formyl-5,6,7,8-tetrahydrofolate. Residues 217–371 form the TrmE-type G domain; it reads GVRVVILGPP…LLTLIQEKSR (155 aa). Residues 227–232, 246–252, and 271–274 contribute to the GTP site; these read NAGKST, SEHPGTT, and DTAG. S231 and T252 together coordinate Mg(2+). Position 445 (K445) interacts with (6S)-5-formyl-5,6,7,8-tetrahydrofolate.

This sequence belongs to the TRAFAC class TrmE-Era-EngA-EngB-Septin-like GTPase superfamily. TrmE GTPase family. In terms of assembly, homodimer. Heterotetramer of two MnmE and two MnmG subunits. It depends on K(+) as a cofactor.

Its subcellular location is the cytoplasm. In terms of biological role, exhibits a very high intrinsic GTPase hydrolysis rate. Involved in the addition of a carboxymethylaminomethyl (cmnm) group at the wobble position (U34) of certain tRNAs, forming tRNA-cmnm(5)s(2)U34. The protein is tRNA modification GTPase MnmE of Anaplasma phagocytophilum (strain HZ).